The chain runs to 168 residues: uncharacterized protein (168 aa).

Disordered regions lie at residues Met1–Asp35, Lys48–Asn97, and Ala126–Met168. The stretch at Lys29 to Lys95 forms a coiled coil. Basic and acidic residues predominate over residues Leu68–Met85. Residues Ala126–Lys139 are compositionally biased toward polar residues. Residues Thr140 to Glu150 are compositionally biased toward basic and acidic residues. The segment covering Val157 to Met168 has biased composition (basic residues).

This is an uncharacterized protein from Schizosaccharomyces pombe (strain 972 / ATCC 24843) (Fission yeast).